The chain runs to 505 residues: MLQINPNFIKHIEQELPSHLSMDEFILACNRPLRQSIRVNTLRISSEDFIALMTPRGWSFSPVPWCSDGFWITLTHDEQLGNCLEHIQGLFYIQEASSMLPPTALFTNDDADERAPLRVLDMASAPGSKTTQMAALMNNNGLLIANEYSASRVKVLHANVLRMGVSNCALTHFDGRVFGEYQYEAFDAVLLDAPCGGEGTVRKDQNALKEWQLDDVIAIADTQKDLIEAAFLALKPGGALVYSTCTLSQLENQAICQHLLSRYPEAVAFESLATLFDGAAKACTEEGFLHVWPQIYDSEGFFVAKMRKTASVPRIKSQPKAQKNFPFSPAPEKQIAALQDYIQQSFALSLPPGAQVYLRDDEFWLFPAPFSDFIGTMRFQRIGIKLADVLKKGFKIKHEAVIALGAKLGTNANNNSNTNPNNNANTNPNNNSNTNPRCIPLNQAQAEQFLMGRDIDTASFDGKLDLTPKGEMMVSYHGAAIGVVKHLGHRLKNSLPRELVRDNLG.

S-adenosyl-L-methionine contacts are provided by residues 123-129 (ASAPGSK), Glu147, Asp174, and Asp192. Cys245 serves as the catalytic Nucleophile. Positions 409–437 (GTNANNNSNTNPNNNANTNPNNNSNTNPR) are disordered. The segment covering 410 to 435 (TNANNNSNTNPNNNANTNPNNNSNTN) has biased composition (low complexity).

Belongs to the class I-like SAM-binding methyltransferase superfamily. RsmB/NOP family.

Its subcellular location is the cytoplasm. The enzyme catalyses cytidine(1407) in 16S rRNA + S-adenosyl-L-methionine = 5-methylcytidine(1407) in 16S rRNA + S-adenosyl-L-homocysteine + H(+). Functionally, specifically methylates the cytosine at position 1407 (m5C1407) of 16S rRNA. This chain is Ribosomal RNA small subunit methyltransferase F, found in Shewanella denitrificans (strain OS217 / ATCC BAA-1090 / DSM 15013).